Reading from the N-terminus, the 279-residue chain is MKTIMLCAICSVTQGNCVEDCAYCTQSAKAGADITKFKEKSVQQVVDEAKMAYKNHALGFCLVTSGARLNDKKTDYIASLARAVHKEVPNLMLIACNGMATYEQLCELKNAGIFSYNHNLETSREYFPKICTTHSWDERYQTNLDAKRAGLMLCTGGIYGVGESEADRVSFRASLKELEPFSSPINFFIRSDALRLDQPPLSADEALKIVRETKSALPETRVMIAGGREKILGERQYEIFENGADAIVIGDYLTAKGEKASKDIEELTKRGFSFASICH.

Residues 2–228 (KTIMLCAICS…ETRVMIAGGR (227 aa)) enclose the Radical SAM core domain. [4Fe-4S] cluster is bound by residues Cys17, Cys21, and Cys24. Residues Cys61, Cys96, Cys154, and Arg221 each contribute to the [2Fe-2S] cluster site.

Belongs to the radical SAM superfamily. Biotin synthase family. In terms of assembly, homodimer. [4Fe-4S] cluster is required as a cofactor. [2Fe-2S] cluster serves as cofactor.

It carries out the reaction (4R,5S)-dethiobiotin + (sulfur carrier)-SH + 2 reduced [2Fe-2S]-[ferredoxin] + 2 S-adenosyl-L-methionine = (sulfur carrier)-H + biotin + 2 5'-deoxyadenosine + 2 L-methionine + 2 oxidized [2Fe-2S]-[ferredoxin]. The protein operates within cofactor biosynthesis; biotin biosynthesis; biotin from 7,8-diaminononanoate: step 2/2. Catalyzes the conversion of dethiobiotin (DTB) to biotin by the insertion of a sulfur atom into dethiobiotin via a radical-based mechanism. In Campylobacter concisus (strain 13826), this protein is Biotin synthase.